A 184-amino-acid chain; its full sequence is Putative YfeABCD regulator YfeE (184 aa).

A run of 3 helical transmembrane segments spans residues isoleucine 15–phenylalanine 35, leucine 84–leucine 104, and isoleucine 162–isoleucine 182.

The protein to E.coli YniB.

Its subcellular location is the cell membrane. Its function is as follows. Putative regulator of YfeABCD, an ABC transporter locus involved in inorganic iron transport. The protein is Putative YfeABCD regulator YfeE (yfeE) of Yersinia pestis.